Here is a 210-residue protein sequence, read N- to C-terminus: Orotate phosphoribosyltransferase (210 aa).

5-phospho-alpha-D-ribose 1-diphosphate is bound by residues R94, K98, H100, and 120–128 (EDLISTGGS). S124 contributes to the orotate binding site.

It belongs to the purine/pyrimidine phosphoribosyltransferase family. PyrE subfamily. In terms of assembly, homodimer. It depends on Mg(2+) as a cofactor.

It carries out the reaction orotidine 5'-phosphate + diphosphate = orotate + 5-phospho-alpha-D-ribose 1-diphosphate. Its pathway is pyrimidine metabolism; UMP biosynthesis via de novo pathway; UMP from orotate: step 1/2. Functionally, catalyzes the transfer of a ribosyl phosphate group from 5-phosphoribose 1-diphosphate to orotate, leading to the formation of orotidine monophosphate (OMP). The chain is Orotate phosphoribosyltransferase from Bacillus mycoides (strain KBAB4) (Bacillus weihenstephanensis).